Consider the following 183-residue polypeptide: uncharacterized protein (183 aa).

The segment at 1-23 is disordered; that stretch reads MGSSFVIDRSSSSPAPPRGPAPK.

This is an uncharacterized protein from Saccharomyces cerevisiae (strain ATCC 204508 / S288c) (Baker's yeast).